The sequence spans 472 residues: Ribulose bisphosphate carboxylase large chain 1 (472 aa).

Residues Asn115 and Thr165 each coordinate substrate. Residue Lys167 is the Proton acceptor of the active site. Lys169 is a substrate binding site. The Mg(2+) site is built by Lys193, Asp195, and Glu196. The residue at position 193 (Lys193) is an N6-carboxylysine. The active-site Proton acceptor is His286. Substrate contacts are provided by Arg287, His319, and Ser371.

The protein belongs to the RuBisCO large chain family. Type I subfamily. In terms of assembly, heterohexadecamer of 8 large chains and 8 small chains. Mg(2+) is required as a cofactor.

It catalyses the reaction 2 (2R)-3-phosphoglycerate + 2 H(+) = D-ribulose 1,5-bisphosphate + CO2 + H2O. The enzyme catalyses D-ribulose 1,5-bisphosphate + O2 = 2-phosphoglycolate + (2R)-3-phosphoglycerate + 2 H(+). RuBisCO catalyzes two reactions: the carboxylation of D-ribulose 1,5-bisphosphate, the primary event in carbon dioxide fixation, as well as the oxidative fragmentation of the pentose substrate. Both reactions occur simultaneously and in competition at the same active site. This chain is Ribulose bisphosphate carboxylase large chain 1, found in Rhodopseudomonas palustris (strain BisB5).